The primary structure comprises 289 residues: Four and a half LIM domains protein 3 (289 aa).

Residue S2 is modified to N-acetylserine. Residues 7–31 (CAKCNESLYGRKYIQTDSGPYCVPC) form a C4-type zinc finger. 2 LIM zinc-binding domains span residues 40–92 (CAEC…CNEC) and 101–153 (CSAC…CVPC). K157 carries the N6-acetyllysine modification. 2 LIM zinc-binding domains span residues 162-212 (CARC…CVAC) and 221-275 (CSSC…FVPD). K244 is modified (N6-acetyllysine).

In terms of assembly, interacts with SOX15; the interaction recruits FHL3 to FOXK1 promoters where it acts as a transcriptional coactivator of FOXK1. In terms of tissue distribution, expressed in myogenic progenitor cells (at protein level). Expressed in skeletal striated muscle and the heart. Expressed to a lesser extent, in lung, and kidney. Expressed in skin and skeletal muscles such as the masseter, tongue, tibialis anterior and plantar muscles.

The protein resides in the nucleus. It localises to the cytoplasm. Its function is as follows. Recruited by SOX15 to FOXK1 promoters where it acts as a transcriptional coactivator of FOXK1. The polypeptide is Four and a half LIM domains protein 3 (Fhl3) (Mus musculus (Mouse)).